The following is a 538-amino-acid chain: Bifunctional purine biosynthesis protein PurH (538 aa).

The 151-residue stretch at Ile-8–Thr-158 folds into the MGS-like domain.

This sequence belongs to the PurH family.

The enzyme catalyses (6R)-10-formyltetrahydrofolate + 5-amino-1-(5-phospho-beta-D-ribosyl)imidazole-4-carboxamide = 5-formamido-1-(5-phospho-D-ribosyl)imidazole-4-carboxamide + (6S)-5,6,7,8-tetrahydrofolate. It carries out the reaction IMP + H2O = 5-formamido-1-(5-phospho-D-ribosyl)imidazole-4-carboxamide. Its pathway is purine metabolism; IMP biosynthesis via de novo pathway; 5-formamido-1-(5-phospho-D-ribosyl)imidazole-4-carboxamide from 5-amino-1-(5-phospho-D-ribosyl)imidazole-4-carboxamide (10-formyl THF route): step 1/1. It participates in purine metabolism; IMP biosynthesis via de novo pathway; IMP from 5-formamido-1-(5-phospho-D-ribosyl)imidazole-4-carboxamide: step 1/1. This chain is Bifunctional purine biosynthesis protein PurH, found in Agrobacterium fabrum (strain C58 / ATCC 33970) (Agrobacterium tumefaciens (strain C58)).